A 120-amino-acid chain; its full sequence is ATP-dependent Clp protease adapter protein ClpS (120 aa).

The segment at Met-1–Ala-27 is disordered.

The protein belongs to the ClpS family. Binds to the N-terminal domain of the chaperone ClpA.

Functionally, involved in the modulation of the specificity of the ClpAP-mediated ATP-dependent protein degradation. The sequence is that of ATP-dependent Clp protease adapter protein ClpS from Pseudomonas putida (strain GB-1).